The chain runs to 888 residues: Potassium channel AKT6 (888 aa).

The Cytoplasmic portion of the chain corresponds to 1-84; it reads MEKKKVWFWG…PFDPRYRAWE (84 aa). A disordered region spans residues 10-31; it reads GVKDDGEGGGGRGGGRTKDAED. The helical transmembrane segment at 85-105 threads the bilayer; that stretch reads TFLVFLVLYTAWASPFEFGFL. Over 106–113 the chain is Extracellular; that stretch reads QKPRPPLS. The chain crosses the membrane as a helical span at residues 114–134; that stretch reads ILDNIVNGFFAVDIVLTFFVA. The Cytoplasmic segment spans residues 135–155; that stretch reads FLDKVTYLLVDDPKRIAWRYA. The helical transmembrane segment at 156 to 176 threads the bilayer; it reads STWLIFDVVSTFPYEIFGSLL. At 177-184 the chain is on the extracellular side; the sequence is HESIQGYG. Residues 185–205 traverse the membrane as a helical; Voltage-sensor segment; it reads IFSMLRLWRLRRVSNCFARLE. At 206 to 219 the chain is on the cytoplasmic side; sequence KDRKYSYFWVRCSK. Residues 220-240 form a helical membrane-spanning segment; sequence LLLVTLFVIHCGACFLYSIAA. The Extracellular segment spans residues 241 to 267; sequence HYPDPSKTFMALTDENWKESPIAVRYN. Residues 268–287 constitute an intramembrane region (pore-forming); the sequence is TAMYWSITTFSTTGYGDIHG. At 288–291 the chain is on the extracellular side; that stretch reads VNSR. Residues 292–312 traverse the membrane as a helical segment; sequence EMTFILFYMVFNLGLSAYIIG. The Cytoplasmic segment spans residues 313 to 888; that stretch reads NMTNLVVHVT…GDFLLLSRDP (576 aa). 398–519 contacts a nucleoside 3',5'-cyclic phosphate; sequence LFHGISNDLL…IMNNLLQHLK (122 aa). ANK repeat units follow at residues 543–572, 576–605, 609–638, 640–669, and 673–702; these read DLPL…SPNE, DGRT…DPNI, EGNV…KLSL, SVSY…DVTL, and NGTT…DLDW. Residues 822–888 form the KHA domain; that stretch reads RVTISSPENG…GDFLLLSRDP (67 aa).

The protein belongs to the potassium channel family. Plant (TC 1.A.1.4) subfamily. In terms of assembly, the potassium channel is probably composed of a homo- or heterotetrameric complex of pore-forming subunits. As to expression, predominantly expressed in flowers; especially in pollen.

The protein localises to the membrane. Its function is as follows. Highly selective inward-rectifying potassium channel that could mediate potassium uptake in the pollen membrane. Plays an important role in pollen tube development. Assuming opened or closed conformations in response to the voltage difference across the membrane, the channel is activated by hyperpolarization. May interact with the cytoskeleton or with regulatory proteins. The sequence is that of Potassium channel AKT6 (AKT6) from Arabidopsis thaliana (Mouse-ear cress).